An 858-amino-acid polypeptide reads, in one-letter code: Protein translocase subunit SecA (858 aa).

Residues glutamine 88, 106-110 (GEGKT), and aspartate 494 contribute to the ATP site. Positions 808–848 (KEDRGQLSYSGGGNAEDARNTPAKAAPRIGRNDPCPCGSGR) are disordered. The Zn(2+) site is built by cysteine 842, cysteine 844, cysteine 853, and cysteine 854.

Belongs to the SecA family. As to quaternary structure, monomer and homodimer. Part of the essential Sec protein translocation apparatus which comprises SecA, SecYEG and auxiliary proteins SecDF-YajC and YidC. Zn(2+) serves as cofactor.

The protein resides in the cell inner membrane. The protein localises to the cytoplasm. It carries out the reaction ATP + H2O + cellular proteinSide 1 = ADP + phosphate + cellular proteinSide 2.. Its function is as follows. Part of the Sec protein translocase complex. Interacts with the SecYEG preprotein conducting channel. Has a central role in coupling the hydrolysis of ATP to the transfer of proteins into and across the cell membrane, serving as an ATP-driven molecular motor driving the stepwise translocation of polypeptide chains across the membrane. This is Protein translocase subunit SecA from Desulfovibrio desulfuricans (strain ATCC 27774 / DSM 6949 / MB).